Reading from the N-terminus, the 135-residue chain is Small ribosomal subunit protein uS8 (135 aa).

The protein belongs to the universal ribosomal protein uS8 family. In terms of assembly, part of the 30S ribosomal subunit. Contacts proteins S5 and S12.

One of the primary rRNA binding proteins, it binds directly to 16S rRNA central domain where it helps coordinate assembly of the platform of the 30S subunit. The protein is Small ribosomal subunit protein uS8 of Salinispora arenicola (strain CNS-205).